A 417-amino-acid polypeptide reads, in one-letter code: NADH-quinone oxidoreductase subunit D (417 aa).

It belongs to the complex I 49 kDa subunit family. As to quaternary structure, NDH-1 is composed of 14 different subunits. Subunits NuoB, C, D, E, F, and G constitute the peripheral sector of the complex.

Its subcellular location is the cell inner membrane. The enzyme catalyses a quinone + NADH + 5 H(+)(in) = a quinol + NAD(+) + 4 H(+)(out). In terms of biological role, NDH-1 shuttles electrons from NADH, via FMN and iron-sulfur (Fe-S) centers, to quinones in the respiratory chain. The immediate electron acceptor for the enzyme in this species is believed to be ubiquinone. Couples the redox reaction to proton translocation (for every two electrons transferred, four hydrogen ions are translocated across the cytoplasmic membrane), and thus conserves the redox energy in a proton gradient. The polypeptide is NADH-quinone oxidoreductase subunit D (Cupriavidus necator (strain ATCC 17699 / DSM 428 / KCTC 22496 / NCIMB 10442 / H16 / Stanier 337) (Ralstonia eutropha)).